A 193-amino-acid chain; its full sequence is 7-methyl-GTP pyrophosphatase (193 aa).

Aspartate 69 acts as the Proton acceptor in catalysis.

It belongs to the Maf family. YceF subfamily. It depends on a divalent metal cation as a cofactor.

The protein localises to the cytoplasm. The catalysed reaction is N(7)-methyl-GTP + H2O = N(7)-methyl-GMP + diphosphate + H(+). In terms of biological role, nucleoside triphosphate pyrophosphatase that hydrolyzes 7-methyl-GTP (m(7)GTP). May have a dual role in cell division arrest and in preventing the incorporation of modified nucleotides into cellular nucleic acids. In Chromohalobacter salexigens (strain ATCC BAA-138 / DSM 3043 / CIP 106854 / NCIMB 13768 / 1H11), this protein is 7-methyl-GTP pyrophosphatase.